The primary structure comprises 348 residues: Zinc finger and SCAN domain-containing protein 16 (348 aa).

Residues 41-123 enclose the SCAN box domain; sequence RQHFRKLCYQ…TVLEDLEREL (83 aa). 2 disordered regions span residues 160–184 and 205–226; these read PKKT…TKNE and RLNK…EGRS. Positions 163–184 are enriched in basic and acidic residues; that stretch reads TQLEQEAGKPQRNGDKTRTKNE. 4 C2H2-type zinc fingers span residues 236–258, 264–286, 292–314, and 320–342; these read YKCD…RRTH, YKCD…HRVH, YKCK…QRIH, and YECD…QRIH.

It belongs to the krueppel C2H2-type zinc-finger protein family.

It is found in the nucleus. In terms of biological role, may be involved in transcriptional regulation. The chain is Zinc finger and SCAN domain-containing protein 16 (ZSCAN16) from Homo sapiens (Human).